Consider the following 396-residue polypeptide: Ribosomal RNA large subunit methyltransferase I (396 aa).

The 80-residue stretch at 2–81 folds into the PUA domain; that stretch reads SVRLVLAKGR…ESIDIAFFTR (80 aa).

It belongs to the methyltransferase superfamily. RlmI family.

The protein resides in the cytoplasm. The catalysed reaction is cytidine(1962) in 23S rRNA + S-adenosyl-L-methionine = 5-methylcytidine(1962) in 23S rRNA + S-adenosyl-L-homocysteine + H(+). Its function is as follows. Specifically methylates the cytosine at position 1962 (m5C1962) of 23S rRNA. The chain is Ribosomal RNA large subunit methyltransferase I from Escherichia coli (strain UTI89 / UPEC).